The following is a 395-amino-acid chain: Elongation factor Tu (395 aa).

The 195-residue stretch at Lys-10–Gln-204 folds into the tr-type G domain. Residues Gly-19–Thr-26 are G1. Gly-19–Thr-26 lines the GTP pocket. A Mg(2+)-binding site is contributed by Thr-26. A G2 region spans residues Gly-60–Asn-64. The G3 stretch occupies residues Asp-81–Gly-84. GTP is bound by residues Asp-81 to His-85 and Asn-136 to Asp-139. Residues Asn-136–Asp-139 form a G4 region. The segment at Ser-174 to Leu-176 is G5.

This sequence belongs to the TRAFAC class translation factor GTPase superfamily. Classic translation factor GTPase family. EF-Tu/EF-1A subfamily. In terms of assembly, monomer.

It is found in the cytoplasm. The catalysed reaction is GTP + H2O = GDP + phosphate + H(+). GTP hydrolase that promotes the GTP-dependent binding of aminoacyl-tRNA to the A-site of ribosomes during protein biosynthesis. This is Elongation factor Tu from Amoebophilus asiaticus (strain 5a2).